The sequence spans 161 residues: 2-C-methyl-D-erythritol 2,4-cyclodiphosphate synthase (161 aa).

Positions 9 and 11 each coordinate a divalent metal cation. Residues 9 to 11 (DFH) and 37 to 38 (HS) contribute to the 4-CDP-2-C-methyl-D-erythritol 2-phosphate site. Residue His-45 coordinates a divalent metal cation. Residues 59-61 (DIG), 64-68 (FPDTD), 135-138 (TTTE), and Arg-145 each bind 4-CDP-2-C-methyl-D-erythritol 2-phosphate.

This sequence belongs to the IspF family. Homotrimer. The cofactor is a divalent metal cation.

The enzyme catalyses 4-CDP-2-C-methyl-D-erythritol 2-phosphate = 2-C-methyl-D-erythritol 2,4-cyclic diphosphate + CMP. The protein operates within isoprenoid biosynthesis; isopentenyl diphosphate biosynthesis via DXP pathway; isopentenyl diphosphate from 1-deoxy-D-xylulose 5-phosphate: step 4/6. Functionally, involved in the biosynthesis of isopentenyl diphosphate (IPP) and dimethylallyl diphosphate (DMAPP), two major building blocks of isoprenoid compounds. Catalyzes the conversion of 4-diphosphocytidyl-2-C-methyl-D-erythritol 2-phosphate (CDP-ME2P) to 2-C-methyl-D-erythritol 2,4-cyclodiphosphate (ME-CPP) with a corresponding release of cytidine 5-monophosphate (CMP). The polypeptide is 2-C-methyl-D-erythritol 2,4-cyclodiphosphate synthase (Leptospira interrogans serogroup Icterohaemorrhagiae serovar Lai (strain 56601)).